The sequence spans 120 residues: Protein EPIDERMAL PATTERNING FACTOR 2 (120 aa).

Residues 1 to 25 (MTKFVRKYMFCLVLVFAACSLVVNS) form the signal peptide. 4 cysteine pairs are disulfide-bonded: Cys-76-Cys-107, Cys-80-Cys-86, Cys-83-Cys-109, and Cys-95-Cys-101.

The protein belongs to the plant cysteine rich small secretory peptide family. Epidermal patterning factor subfamily. Interacts with ERECTA, ERL1 and TMM. Expressed in leaves, especially by the MMCs and their early descendants cells (stomatal lineage cells) including guard mother cells (GMCs).

The protein localises to the secreted. In terms of biological role, controls stomatal patterning. Regulates the number of cells that enter, and remain in, the stomatal lineage by inhibiting protodermal cells from adopting the meristemoid mother cell (MMC) fate in a non-cell-autonomous manner. Mediates stomatal development inhibition. MEPF2: mobile signal controlling stomatal development in a non-cell-autonomous manner. Uses ERECTA as major receptor. Inactivated by cleavage by CRSP (AC Q9LNU1). May act by competing with somatogen (AC Q9SV72) for the same receptor, TMM (AC Q9SSD1). The polypeptide is Protein EPIDERMAL PATTERNING FACTOR 2 (Arabidopsis thaliana (Mouse-ear cress)).